Consider the following 311-residue polypeptide: Pyrimidine-specific ribonucleoside hydrolase RihA (311 aa).

The active site involves His-240.

Belongs to the IUNH family. RihA subfamily.

Hydrolyzes cytidine or uridine to ribose and cytosine or uracil, respectively. In Salmonella enteritidis PT4 (strain P125109), this protein is Pyrimidine-specific ribonucleoside hydrolase RihA.